The following is a 944-amino-acid chain: Neutral alpha-glucosidase AB (944 aa).

A signal peptide spans 1–28 (MAAVAAVAARRRRSWASLVLAFLGVCLG). Residues Cys-41 and Cys-47 are joined by a disulfide bond. Ser-52 is subject to Phosphoserine. An N-linked (GlcNAc...) asparagine glycan is attached at Asn-97. Residues 181–238 (QRAPRVSQGSKDPAEGDGAQPEETPRDGDKPEETQGKAEKDEPGAWEETFKTHSDSKP) are disordered. A compositionally biased stretch (basic and acidic residues) spans 203-236 (ETPRDGDKPEETQGKAEKDEPGAWEETFKTHSDS). The substrate site is built by Asp-283 and Asp-429. Asp-542 (nucleophile) is an active-site residue. Residue Arg-602 participates in substrate binding. Asp-618 serves as the catalytic Proton donor. A disulfide bond links Cys-633 and Cys-644. A substrate-binding site is contributed by His-676.

Belongs to the glycosyl hydrolase 31 family. Heterodimer of a catalytic alpha subunit (GANAB) and a beta subunit (PRKCSH). Binds glycosylated PTPRC. As to expression, detected in placenta. Isoform 1 and isoform 2 are expressed in the kidney and liver.

It is found in the endoplasmic reticulum. The protein localises to the golgi apparatus. The protein resides in the melanosome. The catalysed reaction is N(4)-(alpha-D-Glc-(1-&gt;3)-alpha-D-Man-(1-&gt;2)-alpha-D-Man-(1-&gt;2)-alpha-D-Man-(1-&gt;3)-[alpha-D-Man-(1-&gt;2)-alpha-D-Man-(1-&gt;3)-[alpha-D-Man-(1-&gt;2)-alpha-D-Man-(1-&gt;6)]-alpha-D-Man-(1-&gt;6)]-beta-D-Man-(1-&gt;4)-beta-D-GlcNAc-(1-&gt;4)-beta-D-GlcNAc)-L-asparaginyl-[protein] + H2O = N(4)-(alpha-D-Man-(1-&gt;2)-alpha-D-Man-(1-&gt;2)-alpha-D-Man-(1-&gt;3)-[alpha-D-Man-(1-&gt;2)-alpha-D-Man-(1-&gt;3)-[alpha-D-Man-(1-&gt;2)-alpha-D-Man-(1-&gt;6)]-alpha-D-Man-(1-&gt;6)]-beta-D-Man-(1-&gt;4)-beta-D-GlcNAc-(1-&gt;4)-beta-D-GlcNAc)-L-asparaginyl-[protein] (N-glucan mannose isomer 9A1,2,3B1,2,3) + beta-D-glucose. It carries out the reaction N(4)-(alpha-D-Glc-(1-&gt;3)-alpha-D-Glc-(1-&gt;3)-alpha-D-Man-(1-&gt;2)-alpha-D-Man-(1-&gt;2)-alpha-D-Man-(1-&gt;3)-[alpha-D-Man-(1-&gt;2)-alpha-D-Man-(1-&gt;3)-[alpha-D-Man-(1-&gt;2)-alpha-D-Man-(1-&gt;6)]-alpha-D-Man-(1-&gt;6)]-beta-D-Man-(1-&gt;4)-beta-D-GlcNAc-(1-&gt;4)-beta-D-GlcNAc)-L-asparaginyl-[protein] + H2O = N(4)-(alpha-D-Glc-(1-&gt;3)-alpha-D-Man-(1-&gt;2)-alpha-D-Man-(1-&gt;2)-alpha-D-Man-(1-&gt;3)-[alpha-D-Man-(1-&gt;2)-alpha-D-Man-(1-&gt;3)-[alpha-D-Man-(1-&gt;2)-alpha-D-Man-(1-&gt;6)]-alpha-D-Man-(1-&gt;6)]-beta-D-Man-(1-&gt;4)-beta-D-GlcNAc-(1-&gt;4)-beta-D-GlcNAc)-L-asparaginyl-[protein] + beta-D-glucose. Its pathway is glycan metabolism; N-glycan metabolism. With respect to regulation, inhibited by deoxynojirimycin. In terms of biological role, catalytic subunit of glucosidase II that cleaves sequentially the 2 innermost alpha-1,3-linked glucose residues from the Glc(2)Man(9)GlcNAc(2) oligosaccharide precursor of immature glycoproteins. Required for PKD1/Polycystin-1 and PKD2/Polycystin-2 maturation and localization to the cell surface and cilia. This is Neutral alpha-glucosidase AB from Homo sapiens (Human).